The sequence spans 665 residues: MLSLLLPLISLLFQIQCFTVKSQPVPLNQICSNVTGNFTVNTPYAVNLDRLISSLSSLRRNVNGFYNISVGDSDEKVNSISQCRGDVKLEVCINCIAMAGKRLVTLCPVQKEAIIWYDKCTFRYSNRTIFNRLEISPHTSITGTRNFTGDRDSWEKSLRGLLEGLKNRASVIGRSKKNFVVGETSGPSFQTLFGLVQCTPDISEEDCSYCLSQGIAKIPSCCDMKMGSYVMSPSCMLAYAPWRFYDPVDTDDPSSVPATPSRPPKNETRSVTQGDKNRGVPKALIFASASVAIVVLFIVLLVVFLKLRRKENIRNSENKHENENISTDSMKFDFSVLQDATSHFSLENKLGEGGFGAVYKGVLSDGQKIAVKRLSKNAQQGETEFKNEFLLVAKLQHRNLVKLLGYSIEGTERLLVYEFLPHTSLDKFIFDPIQGNELEWEIRYKIIGGVARGLLYLHQDSRLRIIHRDLKASNILLDEEMTPKIADFGMARLFDIDHTTQRYTNRIVGTFGYMAPEYVMHGQFSFKTDVYSFGVLVLEIISGKKNSGFSSEDSMGDLISFAWRNWKEGVALNLVDKILMTMSSYSSNMIMRCINIGLLCVQEKVAERPSMASVVLMLDGHTIALSEPSKPAFFSHSNAVSDSSSSLGHNAKTSNYNSNTELYPR.

Residues 1–22 form the signal peptide; sequence MLSLLLPLISLLFQIQCFTVKS. At 23-283 the chain is on the extracellular side; that stretch reads QPVPLNQICS…GDKNRGVPKA (261 aa). 2 consecutive Gnk2-homologous domains span residues 26 to 129 and 135 to 244; these read PLNQ…NRTI and ISPH…PWRF. N-linked (GlcNAc...) asparagine glycans are attached at residues asparagine 33, asparagine 37, asparagine 67, asparagine 126, asparagine 146, and asparagine 266. Residues 251–275 form a disordered region; it reads DDPSSVPATPSRPPKNETRSVTQGD. Residues 284–304 traverse the membrane as a helical segment; the sequence is LIFASASVAIVVLFIVLLVVF. The Cytoplasmic segment spans residues 305–665; it reads LKLRRKENIR…YNSNTELYPR (361 aa). One can recognise a Protein kinase domain in the interval 344-624; sequence FSLENKLGEG…VLMLDGHTIA (281 aa). Residues 350–358 and lysine 372 each bind ATP; that span reads LGEGGFGAV. Tyrosine 417 carries the phosphotyrosine modification. Residue aspartate 469 is the Proton acceptor of the active site. At serine 473 the chain carries Phosphoserine. Threonine 510 bears the Phosphothreonine mark. Residue tyrosine 518 is modified to Phosphotyrosine. The interval 641-665 is disordered; that stretch reads SDSSSSLGHNAKTSNYNSNTELYPR. Positions 647–665 are enriched in polar residues; sequence LGHNAKTSNYNSNTELYPR.

It belongs to the protein kinase superfamily. Ser/Thr protein kinase family. CRK subfamily.

It is found in the membrane. The enzyme catalyses L-seryl-[protein] + ATP = O-phospho-L-seryl-[protein] + ADP + H(+). It carries out the reaction L-threonyl-[protein] + ATP = O-phospho-L-threonyl-[protein] + ADP + H(+). The chain is Cysteine-rich receptor-like protein kinase 26 (CRK26) from Arabidopsis thaliana (Mouse-ear cress).